The chain runs to 733 residues: Serine/threonine-protein kinase ATG1c (733 aa).

One can recognise a Protein kinase domain in the interval 12–269 (YLVGRQIGSG…FEEFFNHPFL (258 aa)). ATP contacts are provided by residues 18–26 (IGSGSFSVV) and Lys-41. Catalysis depends on Asp-134, which acts as the Proton acceptor. Disordered regions lie at residues 292-363 (SSGS…ELTS) and 379-414 (FETQ…SQDS). Residues 329–339 (KKTSSMKSSSG) are compositionally biased toward polar residues. Basic and acidic residues-rich tracts occupy residues 342–360 (VDTR…KHTE) and 379–393 (FETQ…RREP). The AIM (Atg8-family-interacting motif) motif lies at 419-422 (FVLV). Disordered regions lie at residues 565-596 (GSPS…SHDG) and 713-733 (HRRS…NRQS). A compositionally biased stretch (polar residues) spans 566-577 (SPSQDINKLRSS). Positions 579-596 (LKHDTHSSNKVTDLSHDG) are enriched in basic and acidic residues. A compositionally biased stretch (polar residues) spans 717-733 (SAGQMQGSSLAMMNRQS).

This sequence belongs to the protein kinase superfamily. Ser/Thr protein kinase family.

The protein resides in the cytoplasmic vesicle. It is found in the autophagosome. In terms of biological role, serine/threonine protein kinase involved in autophagy. The ATG1-ATG13 protein kinase complex regulates downstream events required for autophagosome enclosure and/or vacuolar delivery. This is Serine/threonine-protein kinase ATG1c from Arabidopsis thaliana (Mouse-ear cress).